The sequence spans 329 residues: Homeobox protein ceh-40 (329 aa).

In terms of domain architecture, PBC spans 3–186 (EASKSIMDLL…VIQLKKRYLD (184 aa)). The tract at residues 10–90 (DLLSEVVKIT…EGVAGPDDSL (81 aa)) is PBC-A. The interval 93 to 186 (IQEAAGTDQY…VIQLKKRYLD (94 aa)) is PBC-B. A DNA-binding region (homeobox; TALE-type) is located at residues 187-249 (ARRKRRNFSK…NKRIRYKKTM (63 aa)). The segment at 248–275 (TMAKNEDERRENRKPEDRPPPGAPGAPY) is disordered. The segment covering 250 to 266 (AKNEDERRENRKPEDRP) has biased composition (basic and acidic residues).

Belongs to the TALE/PBX homeobox family. In terms of tissue distribution, expressed in head dopaminergic neurons.

It is found in the nucleus. In terms of biological role, plays a role in regulating gene expression in dopaminergic neurons, acting redundantly with homeobox protein ceh-20 in head neurons. May activate dopamine pathway genes in concert with ETS domain-containing protein ast-1, and homeobox proteins ceh-43 and ceh-20. The protein is Homeobox protein ceh-40 (ceh-40) of Caenorhabditis elegans.